We begin with the raw amino-acid sequence, 337 residues long: Tryptophan--tRNA ligase (337 aa).

ATP is bound by residues 9–11 (RPT) and 17–18 (GH). The 'HIGH' region signature appears at 10 to 18 (PTGRLHLGH). D137 contributes to the L-tryptophan binding site. ATP-binding positions include 149 to 151 (GKD), L187, and 195 to 199 (KMSKS). The 'KMSKS' region motif lies at 195 to 199 (KMSKS).

The protein belongs to the class-I aminoacyl-tRNA synthetase family. As to quaternary structure, homodimer.

The protein localises to the cytoplasm. The catalysed reaction is tRNA(Trp) + L-tryptophan + ATP = L-tryptophyl-tRNA(Trp) + AMP + diphosphate + H(+). Its function is as follows. Catalyzes the attachment of tryptophan to tRNA(Trp). This Treponema pallidum (strain Nichols) protein is Tryptophan--tRNA ligase.